Reading from the N-terminus, the 382-residue chain is Chaperone protein DnaJ (382 aa).

The J domain occupies aspartate 4 to glycine 69. The segment at glycine 138–glutamate 219 adopts a CR-type zinc-finger fold. Zn(2+)-binding residues include cysteine 151, cysteine 154, cysteine 167, cysteine 170, cysteine 193, cysteine 196, cysteine 207, and cysteine 210. 4 CXXCXGXG motif repeats span residues cysteine 151–glycine 158, cysteine 167–glycine 174, cysteine 193–glycine 200, and cysteine 207–glycine 214.

Belongs to the DnaJ family. In terms of assembly, homodimer. Requires Zn(2+) as cofactor.

It localises to the cytoplasm. Participates actively in the response to hyperosmotic and heat shock by preventing the aggregation of stress-denatured proteins and by disaggregating proteins, also in an autonomous, DnaK-independent fashion. Unfolded proteins bind initially to DnaJ; upon interaction with the DnaJ-bound protein, DnaK hydrolyzes its bound ATP, resulting in the formation of a stable complex. GrpE releases ADP from DnaK; ATP binding to DnaK triggers the release of the substrate protein, thus completing the reaction cycle. Several rounds of ATP-dependent interactions between DnaJ, DnaK and GrpE are required for fully efficient folding. Also involved, together with DnaK and GrpE, in the DNA replication of plasmids through activation of initiation proteins. The sequence is that of Chaperone protein DnaJ from Chlorobium luteolum (strain DSM 273 / BCRC 81028 / 2530) (Pelodictyon luteolum).